A 216-amino-acid chain; its full sequence is Probable nicotinate-nucleotide adenylyltransferase (216 aa).

This sequence belongs to the NadD family.

The catalysed reaction is nicotinate beta-D-ribonucleotide + ATP + H(+) = deamido-NAD(+) + diphosphate. The protein operates within cofactor biosynthesis; NAD(+) biosynthesis; deamido-NAD(+) from nicotinate D-ribonucleotide: step 1/1. Its function is as follows. Catalyzes the reversible adenylation of nicotinate mononucleotide (NaMN) to nicotinic acid adenine dinucleotide (NaAD). The polypeptide is Probable nicotinate-nucleotide adenylyltransferase (Geotalea uraniireducens (strain Rf4) (Geobacter uraniireducens)).